The following is a 96-amino-acid chain: Putative septation protein SpoVG (96 aa).

It belongs to the SpoVG family.

Its function is as follows. Essential for sporulation. Interferes with or is a negative regulator of the pathway leading to asymmetric septation. This is Putative septation protein SpoVG from Priestia megaterium (Bacillus megaterium).